A 264-amino-acid chain; its full sequence is Small ribosomal subunit protein eS1 (264 aa).

The span at 236-255 (GEGGSGKRGEAGDKSERPEG) shows a compositional bias: basic and acidic residues. A disordered region spans residues 236-264 (GEGGSGKRGEAGDKSERPEGYEPPVQESV).

It belongs to the eukaryotic ribosomal protein eS1 family. Component of the small ribosomal subunit. Mature ribosomes consist of a small (40S) and a large (60S) subunit. The 40S subunit contains about 33 different proteins and 1 molecule of RNA (18S). The 60S subunit contains about 49 different proteins and 3 molecules of RNA (28S, 5.8S and 5S).

Its subcellular location is the cytoplasm. The protein is Small ribosomal subunit protein eS1 of Spodoptera frugiperda (Fall armyworm).